We begin with the raw amino-acid sequence, 328 residues long: Malate dehydrogenase (328 aa).

12-18 (GAAGQIG) is an NAD(+) binding site. Positions 92 and 98 each coordinate substrate. NAD(+)-binding positions include N105, Q112, and 129-131 (TGN). Residues N131 and R162 each contribute to the substrate site. H187 serves as the catalytic Proton acceptor.

Belongs to the LDH/MDH superfamily. MDH type 2 family.

It catalyses the reaction (S)-malate + NAD(+) = oxaloacetate + NADH + H(+). Functionally, catalyzes the reversible oxidation of malate to oxaloacetate. This chain is Malate dehydrogenase, found in Nocardioides sp. (strain ATCC BAA-499 / JS614).